The sequence spans 281 residues: Phosphate import ATP-binding protein PstB 1 (281 aa).

Positions 1–34 (MTENTAETADESSDGGVTATTGAATTTPTTPPEP) are disordered. A compositionally biased stretch (low complexity) spans 15–28 (GGVTATTGAATTTP). Positions 36-276 (IRARDLDVFY…PEHQRVEEYI (241 aa)) constitute an ABC transporter domain. 68–75 (GPSGCGKS) is a binding site for ATP.

This sequence belongs to the ABC transporter superfamily. Phosphate importer (TC 3.A.1.7) family. The complex is composed of two ATP-binding proteins (PstB), two transmembrane proteins (PstC and PstA) and a solute-binding protein (PstS).

It is found in the cell membrane. The enzyme catalyses phosphate(out) + ATP + H2O = ADP + 2 phosphate(in) + H(+). In terms of biological role, part of the ABC transporter complex PstSACB involved in phosphate import. Responsible for energy coupling to the transport system. The polypeptide is Phosphate import ATP-binding protein PstB 1 (Halobacterium salinarum (strain ATCC 700922 / JCM 11081 / NRC-1) (Halobacterium halobium)).